We begin with the raw amino-acid sequence, 122 residues long: Large ribosomal subunit protein bL12 (122 aa).

The protein belongs to the bacterial ribosomal protein bL12 family. In terms of assembly, homodimer. Part of the ribosomal stalk of the 50S ribosomal subunit. Forms a multimeric L10(L12)X complex, where L10 forms an elongated spine to which 2 to 4 L12 dimers bind in a sequential fashion. Binds GTP-bound translation factors.

Its function is as follows. Forms part of the ribosomal stalk which helps the ribosome interact with GTP-bound translation factors. Is thus essential for accurate translation. This Vibrio vulnificus (strain CMCP6) protein is Large ribosomal subunit protein bL12.